Consider the following 1125-residue polypeptide: Protein efr-3 (1125 aa).

Disordered regions lie at residues 240 to 261 (RTSN…PNPI), 471 to 493 (RPSR…NGAA), 788 to 819 (TSPP…KDET), and 845 to 1093 (QAGS…LGEK). Over residues 242–252 (SNATAQPSETT) the composition is skewed to polar residues. A compositionally biased stretch (low complexity) spans 788–798 (TSPPTSPTTSP). Over residues 845-854 (QAGSSQTASL) the composition is skewed to polar residues. A compositionally biased stretch (low complexity) spans 855–877 (NGTNGTHRNTVNNNNRLGVNGVT). Polar residues-rich tracts occupy residues 878-896 (SPNG…TGPN), 975-1011 (LSFN…TQQL), and 1046-1071 (SRTT…TSSK).

It belongs to the EFR3 family.

This chain is Protein efr-3 (efr-3), found in Neurospora crassa (strain ATCC 24698 / 74-OR23-1A / CBS 708.71 / DSM 1257 / FGSC 987).